A 292-amino-acid chain; its full sequence is Universal stress protein Mb2346c (292 aa).

The protein belongs to the universal stress protein A family.

This Mycobacterium bovis (strain ATCC BAA-935 / AF2122/97) protein is Universal stress protein Mb2346c.